A 403-amino-acid polypeptide reads, in one-letter code: Large ribosomal subunit protein uL3 (403 aa).

The tract at residues 1 to 38 (MSHRKFSAPRHGSLGFLPRKRSSRHRGKVKSFPKDDSS) is disordered. Serine 13 carries the post-translational modification Phosphoserine. Residues 18–31 (PRKRSSRHRGKVKS) are compositionally biased toward basic residues. Residue lysine 39 forms a Glycyl lysine isopeptide (Lys-Gly) (interchain with G-Cter in SUMO2) linkage. At lysine 136 the chain carries N6-acetyllysine. Residues lysine 224 and lysine 226 each participate in a glycyl lysine isopeptide (Lys-Gly) (interchain with G-Cter in SUMO2) cross-link. Histidine 245 is subject to Tele-methylhistidine. N6-acetyllysine; alternate is present on residues lysine 286 and lysine 294. Lysine 286 participates in a covalent cross-link: Glycyl lysine isopeptide (Lys-Gly) (interchain with G-Cter in SUMO2); alternate. Residue lysine 294 forms a Glycyl lysine isopeptide (Lys-Gly) (interchain with G-Cter in SUMO1); alternate linkage. Serine 304 is modified (phosphoserine). Lysine 366 bears the N6-acetyllysine; alternate mark. Lysine 366 is covalently cross-linked (Glycyl lysine isopeptide (Lys-Gly) (interchain with G-Cter in SUMO2); alternate). The residue at position 373 (lysine 373) is an N6-acetyllysine. Glycyl lysine isopeptide (Lys-Gly) (interchain with G-Cter in SUMO2) cross-links involve residues lysine 386, lysine 393, and lysine 399.

Belongs to the universal ribosomal protein uL3 family. As to quaternary structure, component of the large ribosomal subunit. Interacts with DHX33. Post-translationally, constitutively monomethylated at His-245 by METTL18. Methylation at His-245 regulates translation elongation by slowing ribosome traversal on tyrosine codons: slower elongation provides enough time for proper folding of synthesized proteins and prevents cellular aggregation of tyrosine-rich proteins It is not required for incorporation of RPL3 into ribosomes.

It localises to the nucleus. The protein resides in the nucleolus. It is found in the cytoplasm. Its function is as follows. Component of the large ribosomal subunit. The ribosome is a large ribonucleoprotein complex responsible for the synthesis of proteins in the cell. This Bos taurus (Bovine) protein is Large ribosomal subunit protein uL3 (RPL3).